A 307-amino-acid polypeptide reads, in one-letter code: Ribosomal RNA small subunit methyltransferase H (307 aa).

Residues 32 to 34 (GGH), D52, F78, D100, and Q107 contribute to the S-adenosyl-L-methionine site.

It belongs to the methyltransferase superfamily. RsmH family.

It localises to the cytoplasm. It carries out the reaction cytidine(1402) in 16S rRNA + S-adenosyl-L-methionine = N(4)-methylcytidine(1402) in 16S rRNA + S-adenosyl-L-homocysteine + H(+). Its function is as follows. Specifically methylates the N4 position of cytidine in position 1402 (C1402) of 16S rRNA. This Coxiella burnetii (strain CbuG_Q212) (Coxiella burnetii (strain Q212)) protein is Ribosomal RNA small subunit methyltransferase H.